Reading from the N-terminus, the 288-residue chain is Ribosomal protein L11 methyltransferase (288 aa).

The S-adenosyl-L-methionine site is built by threonine 141, glycine 164, aspartate 186, and asparagine 227.

It belongs to the methyltransferase superfamily. PrmA family.

The protein localises to the cytoplasm. It catalyses the reaction L-lysyl-[protein] + 3 S-adenosyl-L-methionine = N(6),N(6),N(6)-trimethyl-L-lysyl-[protein] + 3 S-adenosyl-L-homocysteine + 3 H(+). Its function is as follows. Methylates ribosomal protein L11. The chain is Ribosomal protein L11 methyltransferase from Myxococcus xanthus (strain DK1622).